The chain runs to 345 residues: Galacturonate transporter (345 aa).

An N-terminal signal peptide occupies residues 1–32; sequence MFKIKGLRWYMIGLVTIGTVLGYLTRNAIAAA. A run of 8 helical transmembrane segments spans residues 49–69, 76–96, 100–120, 139–159, 165–185, 237–257, 265–285, and 304–324; these read YIIA…GYVL, VGYA…ALAN, GLAV…PAGL, FNVG…WAIM, MAFL…LYFY, FLAE…MFKA, IAMF…LGGY, and LVVT…LFTS.

The protein belongs to the major facilitator superfamily. Phthalate permease family.

It localises to the cell inner membrane. The enzyme catalyses aldehydo-D-galacturonate(out) + H(+)(out) = aldehydo-D-galacturonate(in) + H(+)(in). With respect to regulation, inhibited by cyanide and 2,4-dinitrophenol, but not by arsenate. Its function is as follows. Transport of D-galacturonate. Cannot transport the dimer digalacturonic acid. Uptake is an active process. In Dickeya chrysanthemi (Pectobacterium chrysanthemi), this protein is Galacturonate transporter.